Consider the following 546-residue polypeptide: Probable lysosomal cobalamin transporter (546 aa).

A run of 4 helical transmembrane segments spans residues 8 to 28, 48 to 68, 102 to 122, and 141 to 161; these read LAQG…FSWF, IIAL…IFLV, ILYA…YFFF, and YSIG…FAPL. N-linked (GlcNAc...) asparagine glycosylation occurs at Asn167. Helical transmembrane passes span 189-209, 304-324, 352-372, and 407-427; these read TALS…MITY, MVFG…LFIT, IIMV…LLVV, and ALLF…VMLF. N-linked (GlcNAc...) asparagine glycosylation is found at Asn444, Asn452, and Asn459. The chain crosses the membrane as a helical span at residues 495 to 515; sequence VWFFGACYYWGTWLFLVVFMT.

The protein belongs to the LIMR family. LMBRD1 subfamily.

It localises to the lysosome membrane. Probable lysosomal cobalamin transporter. Required to export cobalamin from lysosomes allowing its conversion to cofactors. This chain is Probable lysosomal cobalamin transporter, found in Nematostella vectensis (Starlet sea anemone).